We begin with the raw amino-acid sequence, 364 residues long: F-box/LRR-repeat protein At1g55660 (364 aa).

In terms of domain architecture, F-box spans 52–98 (MDKISQLPDELLVKVLSFLSTKDAVSTSILSMRWKSLWMWLPKLEYN). LRR repeat units lie at residues 158 to 179 (NVRE…LPKS), 185 to 206 (SIVI…VCLP), 207 to 228 (SLKT…HRLL), 233 to 254 (VLED…SVIV), 256 to 277 (SLQR…KMNS), and 279 to 300 (SLKY…ESDS).

The chain is F-box/LRR-repeat protein At1g55660 from Arabidopsis thaliana (Mouse-ear cress).